We begin with the raw amino-acid sequence, 347 residues long: Palmitoyltransferase ZDHHC19 (347 aa).

2 consecutive transmembrane segments (helical) span residues 29 to 49 and 59 to 79; these read VFAAFNVTLLLFLSGLFFGFP and WAFPAITGPLFILTFFSLVSL. Residues 112–162 form the DHHC domain; it reads EWCPKCLFHRPPRTYHCPWCNICVEDFDHHCKWVNNCIGHRNFRLFMLLVL. Catalysis depends on Cys142, which acts as the S-palmitoyl cysteine intermediate. 2 helical membrane-spanning segments follow: residues 156-176 and 194-214; these read LFMLLVLSLCLYSGALLVTCL and AILVAVPAAGFLIPLFLLLLI. Residues 275–347 form a disordered region; sequence IQEKTKPSPP…PTAEPAAGDP (73 aa).

The protein belongs to the DHHC palmitoyltransferase family.

The protein localises to the golgi apparatus membrane. It localises to the cytoplasm. It is found in the perinuclear region. It catalyses the reaction L-cysteinyl-[protein] + hexadecanoyl-CoA = S-hexadecanoyl-L-cysteinyl-[protein] + CoA. Its function is as follows. Palmitoyltransferase that mediates palmitoylation oproteins, such as RRAS and SQSTM1. Catalyzes palmitoylation of RRAS, leading to increased cell viability. Acts as a positive regulator of autophagy by mediating palmitoylation of SQSTM1, promoting affinity between SQSTM1 and ATG8 proteins and recruitment of ubiquitinated cargo proteins to autophagosomes. The protein is Palmitoyltransferase ZDHHC19 (Zdhhc19) of Mus musculus (Mouse).